The following is a 266-amino-acid chain: UPF0294 protein YafD (266 aa).

It belongs to the UPF0294 family.

The protein resides in the cytoplasm. The protein is UPF0294 protein YafD of Salmonella typhi.